A 425-amino-acid chain; its full sequence is Histidine--tRNA ligase (425 aa).

The protein belongs to the class-II aminoacyl-tRNA synthetase family. In terms of assembly, homodimer.

The protein resides in the cytoplasm. It catalyses the reaction tRNA(His) + L-histidine + ATP = L-histidyl-tRNA(His) + AMP + diphosphate + H(+). In Listeria innocua serovar 6a (strain ATCC BAA-680 / CLIP 11262), this protein is Histidine--tRNA ligase.